Reading from the N-terminus, the 247-residue chain is Probable transcriptional regulatory protein LPC_0711 (247 aa).

It belongs to the TACO1 family.

The protein localises to the cytoplasm. The sequence is that of Probable transcriptional regulatory protein LPC_0711 from Legionella pneumophila (strain Corby).